The sequence spans 62 residues: Large ribosomal subunit protein bL33 (62 aa).

This sequence belongs to the bacterial ribosomal protein bL33 family.

This is Large ribosomal subunit protein bL33 from Parabacteroides distasonis (strain ATCC 8503 / DSM 20701 / CIP 104284 / JCM 5825 / NCTC 11152).